The chain runs to 190 residues: Ganglioside GM2 activator (190 aa).

A signal peptide spans 1–23; it reads MQSLMQAPVLIALGLLFAAPAQA. 4 disulfides stabilise this stretch: Cys-36–Cys-180, Cys-96–Cys-103, Cys-109–Cys-135, and Cys-122–Cys-133. N-linked (GlcNAc...) asparagine glycosylation occurs at Asn-60.

Its subcellular location is the lysosome. It carries out the reaction cholesterol(in) = cholesterol(out). Its function is as follows. The large binding pocket can accommodate several single chain phospholipids and fatty acids, GM2A also exhibits some calcium-independent phospholipase activity. Binds gangliosides and stimulates ganglioside GM2 degradation. It stimulates only the breakdown of ganglioside GM2 and glycolipid GA2 by beta-hexosaminidase A. It extracts single GM2 molecules from membranes and presents them in soluble form to beta-hexosaminidase A for cleavage of N-acetyl-D-galactosamine and conversion to GM3. Has cholesterol transfer activity. In Macaca fascicularis (Crab-eating macaque), this protein is Ganglioside GM2 activator (GM2A).